Here is a 123-residue protein sequence, read N- to C-terminus: Ribosome-binding factor A (123 aa).

This sequence belongs to the RbfA family. Monomer. Binds 30S ribosomal subunits, but not 50S ribosomal subunits or 70S ribosomes.

Its subcellular location is the cytoplasm. Its function is as follows. One of several proteins that assist in the late maturation steps of the functional core of the 30S ribosomal subunit. Associates with free 30S ribosomal subunits (but not with 30S subunits that are part of 70S ribosomes or polysomes). Required for efficient processing of 16S rRNA. May interact with the 5'-terminal helix region of 16S rRNA. The sequence is that of Ribosome-binding factor A from Koribacter versatilis (strain Ellin345).